A 334-amino-acid polypeptide reads, in one-letter code: D-fructose 1,6-bisphosphatase class 2/sedoheptulose 1,7-bisphosphatase (334 aa).

Positions 33, 57, 85, and 88 each coordinate Mn(2+). Residues 88–90 (EGT), tyrosine 119, 164–166 (RAR), and 186–188 (DGD) contribute to the substrate site. Glutamate 213 contacts Mn(2+).

Belongs to the FBPase class 2 family. In terms of assembly, homotetramer. Mn(2+) serves as cofactor.

It catalyses the reaction beta-D-fructose 1,6-bisphosphate + H2O = beta-D-fructose 6-phosphate + phosphate. It carries out the reaction D-sedoheptulose 1,7-bisphosphate + H2O = D-sedoheptulose 7-phosphate + phosphate. The protein operates within carbohydrate biosynthesis; Calvin cycle. Its function is as follows. Catalyzes the hydrolysis of fructose 1,6-bisphosphate (Fru 1,6-P2) and sedoheptulose 1,7-bisphosphate (Sed 1,7-P2) to fructose 6-phosphate and sedoheptulose 7-phosphate, respectively. This chain is D-fructose 1,6-bisphosphatase class 2/sedoheptulose 1,7-bisphosphatase, found in Synechococcus sp. (strain RCC307).